We begin with the raw amino-acid sequence, 404 residues long: Multidrug resistance protein MdtG (404 aa).

Transmembrane regions (helical) follow at residues 19–39, 56–76, 90–110, 113–133, 144–164, 171–191, 222–242, 254–274, 288–308, 317–337, and 376–396; these read LGCFLTGAAFSLVMPFLPLYV, LVFSITFLFSAIASPFWGGLA, LGMAIVMLLMGMAQNIWQFLI, ALLGLLGGFIPNANALIATQV, TLSTGGVSGALLGPLAGGLLA, PVFFITASVLFICFLLTFFFI, LFVTTLIIQVATGSIAPILTL, IAFISGMIASVPGVAALLSAP, ILIVALIISVLLLIPMSFVQT, FLLGAADGALLPAVQTLLVYN, and AVFCVTAGVVLFNAIYSWNSL.

This sequence belongs to the major facilitator superfamily. DHA1 family. MdtG (TC 2.A.1.2.20) subfamily.

The protein localises to the cell inner membrane. This Salmonella heidelberg (strain SL476) protein is Multidrug resistance protein MdtG.